Here is a 333-residue protein sequence, read N- to C-terminus: FAD-dependent monooxygenase pytG (333 aa).

Residues 6–26 (LPNVSVAIIGAGIGGLTLGAF) form a helical membrane-spanning segment. Residues E38 and R109 each contribute to the FAD site. The N-linked (GlcNAc...) asparagine glycan is linked to N303.

The protein belongs to the paxM FAD-dependent monooxygenase family. It depends on FAD as a cofactor.

Its subcellular location is the membrane. It participates in secondary metabolite biosynthesis. FAD-dependent monooxygenase; part of the gene cluster that mediates the biosynthesis of pyranterreones, a family of antioxidative compounds. The first step of pyranonigrins biosynthesis is performed by the hybrid PKS-NRPS synthetase pytA that condenses 4 malonyl-CoA units ato the acetyl starter unit by the modular PKS of pytA. The acyl chain is then connected to an L-serine through the amide bond by the modular NRPS of pytA. A tetramic acid is formed and released from the PKS-NRPS pytA to give pyranterreone 5 with the help of the thioesterase pytI. Pyranterreone 5 could be methylated by pytC to afford pyranterreone 6. Both pyranterreones 5 and 6 are subsequently oxidized by the FAD-linked oxidoreductase pytB and the cytochrome P450 monooxygenase pytD to form the fused gamma-pyrone core, resulting in pyranterreones 7 and 11, respectively. The hydroxy group at C-8 of pyranterreones 7 and 11 are dehydrated by the aspartyl protease pytH to form a delta-7 double bond to give pyranterreones 3 and 1, 2 accordingly. The exo-methylene of pyranterreone 3 could be reduced into a pendant methyl by reductase pytE to provide pyranterreone 4, also known as cordylactam. Pyranterreone 4 can be reconverted to pyranterreone 3 through pytB-catalyzed dehydrogenation or further oxidized to pyranterreones 9 and 10. In Aspergillus terreus (strain NIH 2624 / FGSC A1156), this protein is FAD-dependent monooxygenase pytG.